A 160-amino-acid chain; its full sequence is 2-C-methyl-D-erythritol 2,4-cyclodiphosphate synthase (160 aa).

Residues aspartate 9 and histidine 11 each coordinate a divalent metal cation. 4-CDP-2-C-methyl-D-erythritol 2-phosphate-binding positions include 9 to 11 (DVH) and 35 to 36 (HS). Histidine 43 contacts a divalent metal cation. Residues 57 to 59 (DIG), 62 to 66 (FPDTD), 101 to 107 (AQKPKMA), 133 to 136 (TTTE), phenylalanine 140, and arginine 143 contribute to the 4-CDP-2-C-methyl-D-erythritol 2-phosphate site.

The protein belongs to the IspF family. As to quaternary structure, homotrimer. A divalent metal cation is required as a cofactor.

It catalyses the reaction 4-CDP-2-C-methyl-D-erythritol 2-phosphate = 2-C-methyl-D-erythritol 2,4-cyclic diphosphate + CMP. It participates in isoprenoid biosynthesis; isopentenyl diphosphate biosynthesis via DXP pathway; isopentenyl diphosphate from 1-deoxy-D-xylulose 5-phosphate: step 4/6. Involved in the biosynthesis of isopentenyl diphosphate (IPP) and dimethylallyl diphosphate (DMAPP), two major building blocks of isoprenoid compounds. Catalyzes the conversion of 4-diphosphocytidyl-2-C-methyl-D-erythritol 2-phosphate (CDP-ME2P) to 2-C-methyl-D-erythritol 2,4-cyclodiphosphate (ME-CPP) with a corresponding release of cytidine 5-monophosphate (CMP). The chain is 2-C-methyl-D-erythritol 2,4-cyclodiphosphate synthase from Geobacillus thermodenitrificans (strain NG80-2).